Reading from the N-terminus, the 74-residue chain is Serine rich endogenous peptide 16 (74 aa).

Positions 1–31 (MATKISHLVSLLLSLLLLLLFISSQVGFTEA) are cleaved as a signal peptide. Residues 29 to 74 (TEAKRDERKKMSSPPIPSPLIPSPPIPPPPPRFYVPPSKSRRGKGP) are disordered. A compositionally biased stretch (pro residues) spans 42-62 (PPIPSPLIPSPPIPPPPPRFY). The SCOOP motif motif lies at 60–74 (RFYVPPSKSRRGKGP). The SxS motif essential for MIK2 binding signature appears at 66–68 (SKS).

Belongs to the serine rich endogenous peptide (SCOOP) phytocytokine family. Interacts with MIK2 (via extracellular leucine-rich repeat domain); this interaction triggers the formation of complex between MIK2 and the BAK1/SERK3 and SERK4 coreceptors, and subsequent BAK1 activation by phosphorylation.

The protein localises to the cell membrane. Its subcellular location is the secreted. The protein resides in the extracellular space. It is found in the apoplast. Its function is as follows. Brassicaceae-specific phytocytokine (plant endogenous peptide released into the apoplast) perceived by MIK2 in a BAK1/SERK3 and SERK4 coreceptors-dependent manner, that modulates various physiological and antimicrobial processes including growth prevention and reactive oxygen species (ROS) response regulation. The protein is Serine rich endogenous peptide 16 of Arabidopsis thaliana (Mouse-ear cress).